The chain runs to 790 residues: Phenylalanine--tRNA ligase beta subunit (790 aa).

A tRNA-binding domain is found at 39–154; that stretch reads PDSLNTVVTG…ENTPLGESAC (116 aa). Residues 404-483 enclose the B5 domain; it reads SDPLSLNIRP…FVQKTQKILP (80 aa). Mg(2+)-binding residues include Asp457, Asp463, Glu466, and Glu467. Residues 694–790 form the FDX-ACB domain; sequence PIYPSSSRDI…NLANIGKGNS (97 aa).

It belongs to the phenylalanyl-tRNA synthetase beta subunit family. Type 1 subfamily. Tetramer of two alpha and two beta subunits. Mg(2+) is required as a cofactor.

It localises to the cytoplasm. It catalyses the reaction tRNA(Phe) + L-phenylalanine + ATP = L-phenylalanyl-tRNA(Phe) + AMP + diphosphate + H(+). In Chlamydia muridarum (strain MoPn / Nigg), this protein is Phenylalanine--tRNA ligase beta subunit (pheT).